Consider the following 620-residue polypeptide: 1-deoxy-D-xylulose-5-phosphate synthase (620 aa).

Residues His80 and 121-123 contribute to the thiamine diphosphate site; that span reads GHS. Asp152 is a binding site for Mg(2+). Thiamine diphosphate-binding positions include 153–154, Asn181, Tyr288, and Glu370; that span reads GA. Residue Asn181 coordinates Mg(2+).

This sequence belongs to the transketolase family. DXPS subfamily. In terms of assembly, homodimer. Requires Mg(2+) as cofactor. Thiamine diphosphate serves as cofactor.

It carries out the reaction D-glyceraldehyde 3-phosphate + pyruvate + H(+) = 1-deoxy-D-xylulose 5-phosphate + CO2. It participates in metabolic intermediate biosynthesis; 1-deoxy-D-xylulose 5-phosphate biosynthesis; 1-deoxy-D-xylulose 5-phosphate from D-glyceraldehyde 3-phosphate and pyruvate: step 1/1. In terms of biological role, catalyzes the acyloin condensation reaction between C atoms 2 and 3 of pyruvate and glyceraldehyde 3-phosphate to yield 1-deoxy-D-xylulose-5-phosphate (DXP). In Sodalis glossinidius (strain morsitans), this protein is 1-deoxy-D-xylulose-5-phosphate synthase.